The chain runs to 368 residues: Peptide chain release factor 2 (368 aa).

N5-methylglutamine is present on Gln250.

The protein belongs to the prokaryotic/mitochondrial release factor family. Methylated by PrmC. Methylation increases the termination efficiency of RF2.

It localises to the cytoplasm. Functionally, peptide chain release factor 2 directs the termination of translation in response to the peptide chain termination codons UGA and UAA. This Rickettsia felis (strain ATCC VR-1525 / URRWXCal2) (Rickettsia azadi) protein is Peptide chain release factor 2.